The following is a 423-amino-acid chain: uncharacterized protein (423 aa).

The protein belongs to the asfivirus E423R family.

Its subcellular location is the virion. This is an uncharacterized protein from African swine fever virus (isolate Tick/Malawi/Lil 20-1/1983) (ASFV).